The chain runs to 68 residues: Large ribosomal subunit protein uL29 (68 aa).

This sequence belongs to the universal ribosomal protein uL29 family.

This chain is Large ribosomal subunit protein uL29, found in Streptococcus thermophilus (strain ATCC BAA-250 / LMG 18311).